The sequence spans 371 residues: Pyruvate dehydrogenase E1 component subunit alpha (371 aa).

Heterodimer of an alpha and a beta chain. Requires thiamine diphosphate as cofactor.

It catalyses the reaction N(6)-[(R)-lipoyl]-L-lysyl-[protein] + pyruvate + H(+) = N(6)-[(R)-S(8)-acetyldihydrolipoyl]-L-lysyl-[protein] + CO2. With respect to regulation, activity of the E1 module is inhibited by the pyruvate dehydrogenase inhibitor PdhI. Functionally, the pyruvate dehydrogenase complex catalyzes the overall conversion of pyruvate to acetyl-CoA and CO(2). It contains multiple copies of three enzymatic components: pyruvate dehydrogenase (E1), dihydrolipoamide acetyltransferase (E2) and lipoamide dehydrogenase (E3). Its function is as follows. The B.subtilis PDH complex also possesses branched-chain 2-oxoacid dehydrogenase (BCDH) activity. The sequence is that of Pyruvate dehydrogenase E1 component subunit alpha from Bacillus subtilis (strain 168).